A 305-amino-acid polypeptide reads, in one-letter code: Ribonuclease HIII (305 aa).

Residues 91-305 form the RNase H type-2 domain; it reads WSVIGSDEVG…ANTQKAQKLL (215 aa). A divalent metal cation-binding residues include aspartate 97, glutamate 98, and aspartate 201.

It belongs to the RNase HII family. RnhC subfamily. It depends on Mn(2+) as a cofactor. Mg(2+) is required as a cofactor.

The protein resides in the cytoplasm. It carries out the reaction Endonucleolytic cleavage to 5'-phosphomonoester.. Endonuclease that specifically degrades the RNA of RNA-DNA hybrids. The sequence is that of Ribonuclease HIII from Enterococcus faecalis (strain ATCC 700802 / V583).